Here is a 344-residue protein sequence, read N- to C-terminus: Protein-glutamate methylesterase/protein-glutamine glutaminase (344 aa).

The Response regulatory domain occupies 7-124 (RVLVVDDSAF…SLTFRQVAPE (118 aa)). The residue at position 58 (D58) is a 4-aspartylphosphate. The 191-residue stretch at 154–344 (PAVSGKIVVI…KIPEKLIELV (191 aa)) folds into the CheB-type methylesterase domain. Residues S166, H193, and D289 contribute to the active site.

The protein belongs to the CheB family. Post-translationally, phosphorylated by CheA. Phosphorylation of the N-terminal regulatory domain activates the methylesterase activity.

Its subcellular location is the cytoplasm. It catalyses the reaction [protein]-L-glutamate 5-O-methyl ester + H2O = L-glutamyl-[protein] + methanol + H(+). It carries out the reaction L-glutaminyl-[protein] + H2O = L-glutamyl-[protein] + NH4(+). Its function is as follows. Involved in chemotaxis. Part of a chemotaxis signal transduction system that modulates chemotaxis in response to various stimuli. Catalyzes the demethylation of specific methylglutamate residues introduced into the chemoreceptors (methyl-accepting chemotaxis proteins or MCP) by CheR. Also mediates the irreversible deamidation of specific glutamine residues to glutamic acid. The sequence is that of Protein-glutamate methylesterase/protein-glutamine glutaminase from Thermotoga maritima (strain ATCC 43589 / DSM 3109 / JCM 10099 / NBRC 100826 / MSB8).